A 330-amino-acid polypeptide reads, in one-letter code: MTLAVKVPLKEGEIVRRRLIELGALDNTYKIKREGNFLLIPVKFPVKGFEVVEAELEQVSRRPNSYREIVNVPQELRRFLPTSFDIIGNIAIIEIPEELKGYAKEIGRAIVEVHKNVKAVYMKGSKIEGEYRTRELIHIAGENITETIHRENGIRLKLDVAKVYFSPRLATERMRVFKMAQEGEVVFDMFAGVGPFSILLAKKAELVFACDINPWAIKYLEENIKLNKVNNVVPILGDSREIEVKADRIIMNLPKYAHEFLEHAISCINDGGVIHYYGFGPEGDPYGWHLERIRELANKFGVKVEVLGKRVIRNYAPRQYNIAIDFRVSF.

S-adenosyl-L-methionine is bound by residues Arg-173, 211–212 (DI), 238–239 (DS), and Asn-252.

This sequence belongs to the class I-like SAM-binding methyltransferase superfamily. TRM5/TYW2 family.

The protein localises to the cytoplasm. It carries out the reaction guanosine(37) in tRNA + S-adenosyl-L-methionine = N(1)-methylguanosine(37) in tRNA + S-adenosyl-L-homocysteine + H(+). In terms of biological role, specifically methylates the N1 position of guanosine-37 in various tRNAs. The polypeptide is tRNA (guanine(37)-N(1))-methyltransferase Trm5b (Pyrococcus abyssi (strain GE5 / Orsay)).